The following is a 1188-amino-acid chain: MAGHEVRYGKHRTRRSFSRIKEVLDLPNLIEIQTDSFQDFLDSGLKEVFEDVLPISNFTDTMELEFVGYEFKEPKYTLEEARIHDASYSAPIFVTFRLVNKETGEIKTQEVFFGDFPIMTEMGTFIINGGERIIVSQLVRSPGVYFNDKVDKNGKVGYGSTVIPNRGAWLELETDSKDIAYTRIDRTRKIPFTTLVRALGFSGDDEIVDIFGESDLVRNTIEKDIHKNPSDSRTDEALKEIYERLRPGEPKTADSSRSLLIARFFDARRYDLAAVGRYKVNKKLNIKTRLLNQIIAENLVDAETGEILVEAGTEMTRSVIESIEEHLDGDLNKFVYTPNDYAVVTEPVVLQKFKVVSPIDPDRVVTIVGNANPDDKVRALTPADILAEMSYFLNLAEGLGKVDDIDHLGNRRIRAVGELLANQFRIGLARMERNVRERMSVQDNDVLTPQQIINIRPVTAAVKEFFGSSQLSQFMDQHNPLSELSHKRRLSALGPGGLTRDRAGYEVRDVHYTHYGRMCPIETPEGPNIGLINNLSSFGHLNKYGFIQTPYRKVDRATGTVTNEIVWLTADEEDEYTVAQANSKLNEDGTFAEEIVMGRHQGNNQEFSASVVDFVDVSPKQVVAVATACIPFLENDDSNRALMGANMQRQAVPLIDPKAPYVGTGMEYQAAHDSGAAVIAQHNGKVVFSDAEKVEIRRQDGSLDVYHITKFRRSNSGTAYNQRTLVKVGDIVEKGDFIADGPSMENGEMALGQNPVVAYMTWEGYNFEDAVIMSERLVKEDVYTSVHLEEFESETRDTKLGPEEITREIPNVGEEALKDLDEMGIIRIGAEVKEGDILVGKVTPKGEKDLSAEERLLHAIFGDKSREVRDTSLRVPHGGDGIVRDVKIFTRANGDELQSGVNMLVRVYIAQKRKIKVGDKMAGRHGNKGVVSRIVPVEDMPYLPDGTPVDIMLNPLGVPSRMNIGQVMELHLGMAARNLGIHIATPVFDGASSEDLWDTVREAGMDSDAKTVLYDGRTGEPFDNRVSVGVMYMIKLHHMVDDKLHARSVGPYSLVTQQPLGGKAQFGGQRFGEMEVWALEAYGASNVLQEILTYKSDDVTGRLKAYEAITKGKPIPKPGVPESFRVLVKELQSLGLDMRVLDEDDNEVELRDLDEGEDDDIMHVDDLEKAREKQAQETQEVSETTDEK.

It belongs to the RNA polymerase beta chain family. The RNAP catalytic core consists of 2 alpha, 1 beta, 1 beta' and 1 omega subunit. When a sigma factor is associated with the core the holoenzyme is formed, which can initiate transcription.

The enzyme catalyses RNA(n) + a ribonucleoside 5'-triphosphate = RNA(n+1) + diphosphate. Its function is as follows. DNA-dependent RNA polymerase catalyzes the transcription of DNA into RNA using the four ribonucleoside triphosphates as substrates. In Streptococcus pyogenes serotype M18 (strain MGAS8232), this protein is DNA-directed RNA polymerase subunit beta.